A 251-amino-acid polypeptide reads, in one-letter code: Hydroxyacylglutathione hydrolase (251 aa).

Zn(2+) contacts are provided by His-53, His-55, Asp-57, His-58, His-110, Asp-127, and His-165.

It belongs to the metallo-beta-lactamase superfamily. Glyoxalase II family. In terms of assembly, monomer. The cofactor is Zn(2+).

The catalysed reaction is an S-(2-hydroxyacyl)glutathione + H2O = a 2-hydroxy carboxylate + glutathione + H(+). It participates in secondary metabolite metabolism; methylglyoxal degradation; (R)-lactate from methylglyoxal: step 2/2. In terms of biological role, thiolesterase that catalyzes the hydrolysis of S-D-lactoyl-glutathione to form glutathione and D-lactic acid. The sequence is that of Hydroxyacylglutathione hydrolase from Cronobacter sakazakii (strain ATCC BAA-894) (Enterobacter sakazakii).